Here is a 388-residue protein sequence, read N- to C-terminus: MLTSMKSKFDTLFNTQPEVAAFAPGRINLIGEHTDYNGGYVFPAAIELGTYGLASKRNDNKICLYSNNFESTGTIEFSLDELQFDTTHSWANYPKGMVKFLKESGYQIDSGFNILIEGNIPNGASLSSSASIEILMGWLLKALFNLEVERLELIELGRKVENQFIGVNSGIMDQFIVGMGRKDQAILLDTATLEYHYVPTEFGDYVISIMNTNKRRELAESKYNERLKECQSALALLQQELDVDALGHIDVTTFEKHAYLIEEDVLLRRARHAITENARVKEAHAALNRKDFIEFGRLLNASHASLKNDYEVTGIELDTLAETAQQVEGVLGARMTGAGFAGCAIALVHKDRIKDLEEEVTKIYKDKIGYEPSFYHVDIGDGVKYIKI.

32–35 (EHTD) provides a ligand contact to substrate. Residues serine 66 and 123 to 129 (GASLSSS) each bind ATP. Mg(2+) is bound by residues serine 129 and glutamate 161. Aspartate 173 (proton acceptor) is an active-site residue. Tyrosine 223 provides a ligand contact to substrate.

It belongs to the GHMP kinase family. GalK subfamily.

It is found in the cytoplasm. It catalyses the reaction alpha-D-galactose + ATP = alpha-D-galactose 1-phosphate + ADP + H(+). It participates in carbohydrate metabolism; galactose metabolism. Functionally, catalyzes the transfer of the gamma-phosphate of ATP to D-galactose to form alpha-D-galactose-1-phosphate (Gal-1-P). This is Galactokinase from Staphylococcus carnosus (strain TM300).